Consider the following 447-residue polypeptide: Rab GDP dissociation inhibitor alpha (447 aa).

It belongs to the Rab GDI family. As to quaternary structure, interacts with RHOH. Interacts with the non-phosphorylated forms of RAB1A, RAB3A, RAB5A, RAB5B, RAB5C, RAB8A, RAB8B, RAB10, RAB12, RAB35, and RAB43.

It localises to the cytoplasm. The protein localises to the golgi apparatus. Its subcellular location is the trans-Golgi network. Its function is as follows. Regulates the GDP/GTP exchange reaction of most Rab proteins by inhibiting the dissociation of GDP from them, and the subsequent binding of GTP to them. Promotes the dissociation of GDP-bound Rab proteins from the membrane and inhibits their activation. Promotes the dissociation of RAB1A, RAB3A, RAB5A and RAB10 from membranes. The polypeptide is Rab GDP dissociation inhibitor alpha (GDI1) (Pongo pygmaeus (Bornean orangutan)).